Consider the following 162-residue polypeptide: MKILSVFFLVLFFIIFNKESLAEKTNKETGSGVSSKKKNKKGSGEPLIDVHDLISDMIKKEEELVEVNKRKSKYKLATSVLAGLLGVVSTVLLGGVGLVLYNTEKGRHPFKIGSSDPADNANPDADSESNGEPNADPQVTAQDVTPEQPQGDDNNLVSGPEH.

Positions 1–22 (MKILSVFFLVLFFIIFNKESLA) are cleaved as a signal peptide. A helical transmembrane segment spans residues 80 to 101 (VLAGLLGVVSTVLLGGVGLVLY). The tract at residues 109 to 162 (PFKIGSSDPADNANPDADSESNGEPNADPQVTAQDVTPEQPQGDDNNLVSGPEH) is disordered. Residues 114 to 130 (SSDPADNANPDADSESN) are compositionally biased toward low complexity. Residues 120-137 (NANPDADSESNGEPNADP) are epitope (deduced). Residues 137–162 (PQVTAQDVTPEQPQGDDNNLVSGPEH) show a composition bias toward polar residues.

It localises to the parasitophorous vacuole membrane. This Plasmodium falciparum protein is Malaria protein EXP-1 (EXP-1).